The following is a 122-amino-acid chain: Small ribosomal subunit protein uS13 (122 aa).

Basic residues predominate over residues 97–114; that stretch reads PVRGQRTHTNAKTRKGKS. Residues 97 to 122 are disordered; sequence PVRGQRTHTNAKTRKGKSRLPIAGKE.

This sequence belongs to the universal ribosomal protein uS13 family. In terms of assembly, part of the 30S ribosomal subunit. Forms a loose heterodimer with protein S19. Forms two bridges to the 50S subunit in the 70S ribosome.

Its function is as follows. Located at the top of the head of the 30S subunit, it contacts several helices of the 16S rRNA. In the 70S ribosome it contacts the 23S rRNA (bridge B1a) and protein L5 of the 50S subunit (bridge B1b), connecting the 2 subunits; these bridges are implicated in subunit movement. Contacts the tRNAs in the A and P-sites. The sequence is that of Small ribosomal subunit protein uS13 from Wolbachia sp. subsp. Brugia malayi (strain TRS).